Consider the following 388-residue polypeptide: Processive diacylglycerol beta-glucosyltransferase (388 aa).

Belongs to the glycosyltransferase 28 family. UgtP subfamily.

It is found in the cell membrane. The enzyme catalyses a 1,2-diacyl-3-O-(beta-D-glucopyranosyl)-sn-glycerol + UDP-alpha-D-glucose = a 1,2-diacyl-3-O-(beta-D-Glc-(1-&gt;6)-beta-D-Glc)-sn-glycerol + UDP + H(+). The catalysed reaction is a 1,2-diacyl-3-O-(beta-D-Glc-(1-&gt;6)-beta-D-Glc)-sn-glycerol + UDP-alpha-D-glucose = a 1,2-diacyl-3-O-(beta-D-Glc-(1-&gt;6)-beta-D-Glc-(1-&gt;6)-beta-D-Glc)-sn-glycerol + UDP + H(+). It carries out the reaction a 1,2-diacyl-sn-glycerol + UDP-alpha-D-glucose = a 1,2-diacyl-3-O-(beta-D-glucopyranosyl)-sn-glycerol + UDP + H(+). The protein operates within glycolipid metabolism; diglucosyl-diacylglycerol biosynthesis. Processive glucosyltransferase involved in the biosynthesis of both the bilayer- and non-bilayer-forming membrane glucolipids. Is able to successively transfer up to three glucosyl residues to diacylglycerol (DAG), thereby catalyzing the formation of beta-monoglucosyl-DAG (3-O-(beta-D-glucopyranosyl)-1,2-diacyl-sn-glycerol), beta-diglucosyl-DAG (3-O-(beta-D-glucopyranosyl-beta-(1-&gt;6)-D-glucopyranosyl)-1,2-diacyl-sn-glycerol) and beta-triglucosyl-DAG (3-O-(beta-D-glucopyranosyl-beta-(1-&gt;6)-D-glucopyranosyl-beta-(1-&gt;6)-D-glucopyranosyl)-1,2-diacyl-sn-glycerol). Beta-diglucosyl-DAG is the predominant glycolipid found in Bacillales and is also used as a membrane anchor for lipoteichoic acid (LTA). The sequence is that of Processive diacylglycerol beta-glucosyltransferase from Bacillus cereus (strain ATCC 14579 / DSM 31 / CCUG 7414 / JCM 2152 / NBRC 15305 / NCIMB 9373 / NCTC 2599 / NRRL B-3711).